Reading from the N-terminus, the 383-residue chain is Deoxyguanosinetriphosphate triphosphohydrolase-like protein (383 aa).

The HD domain maps to 62–198 (RLTHSLEVST…AALADDISYI (137 aa)).

Belongs to the dGTPase family. Type 2 subfamily.

This is Deoxyguanosinetriphosphate triphosphohydrolase-like protein from Rickettsia felis (strain ATCC VR-1525 / URRWXCal2) (Rickettsia azadi).